Here is a 368-residue protein sequence, read N- to C-terminus: 1-deoxy-D-xylulose 5-phosphate reductoisomerase (368 aa).

Residues threonine 7, glycine 8, serine 9, isoleucine 10, glycine 31, lysine 32, asparagine 33, and asparagine 113 each contribute to the NADPH site. Lysine 114 is a 1-deoxy-D-xylulose 5-phosphate binding site. Glutamate 115 serves as a coordination point for NADPH. Aspartate 133 provides a ligand contact to Mn(2+). 4 residues coordinate 1-deoxy-D-xylulose 5-phosphate: serine 134, glutamate 135, serine 158, and histidine 181. Glutamate 135 provides a ligand contact to Mn(2+). Glycine 187 is a binding site for NADPH. Serine 194, asparagine 199, lysine 200, and glutamate 203 together coordinate 1-deoxy-D-xylulose 5-phosphate. A Mn(2+)-binding site is contributed by glutamate 203.

The protein belongs to the DXR family. It depends on Mg(2+) as a cofactor. Requires Mn(2+) as cofactor.

The catalysed reaction is 2-C-methyl-D-erythritol 4-phosphate + NADP(+) = 1-deoxy-D-xylulose 5-phosphate + NADPH + H(+). It functions in the pathway isoprenoid biosynthesis; isopentenyl diphosphate biosynthesis via DXP pathway; isopentenyl diphosphate from 1-deoxy-D-xylulose 5-phosphate: step 1/6. Its function is as follows. Catalyzes the NADPH-dependent rearrangement and reduction of 1-deoxy-D-xylulose-5-phosphate (DXP) to 2-C-methyl-D-erythritol 4-phosphate (MEP). In Helicobacter pylori (strain P12), this protein is 1-deoxy-D-xylulose 5-phosphate reductoisomerase.